Reading from the N-terminus, the 274-residue chain is Dermonecrotic toxin SdSicTox-betaIIB1bxii (274 aa).

Histidine 5 is an active-site residue. Residues glutamate 25 and aspartate 27 each contribute to the Mg(2+) site. Catalysis depends on histidine 41, which acts as the Nucleophile. 2 disulfides stabilise this stretch: cysteine 45/cysteine 51 and cysteine 47/cysteine 190. A Mg(2+)-binding site is contributed by aspartate 85.

This sequence belongs to the arthropod phospholipase D family. Class II subfamily. The cofactor is Mg(2+). Expressed by the venom gland.

The protein resides in the secreted. It carries out the reaction an N-(acyl)-sphingosylphosphocholine = an N-(acyl)-sphingosyl-1,3-cyclic phosphate + choline. The enzyme catalyses an N-(acyl)-sphingosylphosphoethanolamine = an N-(acyl)-sphingosyl-1,3-cyclic phosphate + ethanolamine. The catalysed reaction is a 1-acyl-sn-glycero-3-phosphocholine = a 1-acyl-sn-glycero-2,3-cyclic phosphate + choline. It catalyses the reaction a 1-acyl-sn-glycero-3-phosphoethanolamine = a 1-acyl-sn-glycero-2,3-cyclic phosphate + ethanolamine. Dermonecrotic toxins cleave the phosphodiester linkage between the phosphate and headgroup of certain phospholipids (sphingolipid and lysolipid substrates), forming an alcohol (often choline) and a cyclic phosphate. This toxin acts on sphingomyelin (SM). It may also act on ceramide phosphoethanolamine (CPE), lysophosphatidylcholine (LPC) and lysophosphatidylethanolamine (LPE), but not on lysophosphatidylserine (LPS), and lysophosphatidylglycerol (LPG). It acts by transphosphatidylation, releasing exclusively cyclic phosphate products as second products. Induces dermonecrosis, hemolysis, increased vascular permeability, edema, inflammatory response, and platelet aggregation. The polypeptide is Dermonecrotic toxin SdSicTox-betaIIB1bxii (Sicarius cf. damarensis (strain GJB-2008) (Six-eyed sand spider)).